The sequence spans 103 residues: Large ribosomal subunit protein uL24 (103 aa).

This sequence belongs to the universal ribosomal protein uL24 family. Part of the 50S ribosomal subunit.

One of two assembly initiator proteins, it binds directly to the 5'-end of the 23S rRNA, where it nucleates assembly of the 50S subunit. In terms of biological role, one of the proteins that surrounds the polypeptide exit tunnel on the outside of the subunit. In Pediococcus pentosaceus (strain ATCC 25745 / CCUG 21536 / LMG 10740 / 183-1w), this protein is Large ribosomal subunit protein uL24.